Reading from the N-terminus, the 290-residue chain is Agglutinin-2 (290 aa).

The N-terminal stretch at Met-1–Ser-35 is a signal peptide. A glycan (N-linked (GlcNAc...) asparagine) is linked at Asn-155. Glu-165 and Asp-167 together coordinate Mn(2+). Ca(2+)-binding residues include Asp-167, Asn-171, and Asp-175. Residues Asp-175 and His-180 each coordinate Mn(2+). A glycan (N-linked (GlcNAc...) asparagine) is linked at Asn-200.

Belongs to the leguminous lectin family. As to quaternary structure, homotetramer.

In terms of biological role, mannose/glucose binding bark lectin. Bark lectins are storage proteins that probably maintain stocks of nitrogen during dormant period. Self-aggregatable molecules that can bind their own carbohydrate side chains. They could also play a role in the plant's defense against phytophagous invertebrates or herbivorous higher animals. The chain is Agglutinin-2 from Cladrastis kentukea (Yellow wood).